A 253-amino-acid polypeptide reads, in one-letter code: Transcriptional regulatory protein TcrA (253 aa).

Residues 24-138 (RILVVEDEPK…ELFARLRALS (115 aa)) form the Response regulatory domain. D73 carries the post-translational modification 4-aspartylphosphate. Residues 146–244 (PPTLEAGDLR…IRGAGYRLRK (99 aa)) constitute a DNA-binding region (ompR/PhoB-type).

As to quaternary structure, interacts with HK2. In terms of processing, phosphorylated by HK2.

It is found in the cytoplasm. Its function is as follows. Member of the three-protein two-component system HK1/HK2/TcrA. In Mycobacterium tuberculosis (strain ATCC 25618 / H37Rv), this protein is Transcriptional regulatory protein TcrA (tcrA).